The primary structure comprises 143 residues: Granulocyte-macrophage colony-stimulating factor (143 aa).

An N-terminal signal peptide occupies residues 1 to 17; that stretch reads MWLQNLLLLGTVVCSFS. Threonine 27 carries an O-linked (GalNAc...) threonine glycan. 2 N-linked (GlcNAc...) asparagine glycosylation sites follow: asparagine 44 and asparagine 54. 2 disulfides stabilise this stretch: cysteine 70–cysteine 112 and cysteine 104–cysteine 137.

It belongs to the GM-CSF family. As to quaternary structure, monomer. The signaling GM-CSF receptor complex is a dodecamer of two head-to-head hexamers of two alpha, two beta, and two ligand subunits.

It is found in the secreted. Cytokine that stimulates the growth and differentiation of hematopoietic precursor cells from various lineages, including granulocytes, macrophages, eosinophils and erythrocytes. The chain is Granulocyte-macrophage colony-stimulating factor (CSF2) from Bos taurus (Bovine).